We begin with the raw amino-acid sequence, 325 residues long: tRNA N6-adenosine threonylcarbamoyltransferase (325 aa).

Positions 107, 111, and 127 each coordinate Fe cation. Substrate is bound by residues 127-131 (YVSGG), Asp-159, Gly-172, Glu-176, and Asn-257. Position 285 (Asp-285) interacts with Fe cation.

It belongs to the KAE1 / TsaD family. As to quaternary structure, monomer. Component of the KEOPS complex that consists of Kae1, Bud32, Cgi121 and Pcc1; the whole complex dimerizes. It depends on Fe(2+) as a cofactor.

It is found in the cytoplasm. The enzyme catalyses L-threonylcarbamoyladenylate + adenosine(37) in tRNA = N(6)-L-threonylcarbamoyladenosine(37) in tRNA + AMP + H(+). Required for the formation of a threonylcarbamoyl group on adenosine at position 37 (t(6)A37) in tRNAs that read codons beginning with adenine. Is a component of the KEOPS complex that is probably involved in the transfer of the threonylcarbamoyl moiety of threonylcarbamoyl-AMP (TC-AMP) to the N6 group of A37. Kae1 likely plays a direct catalytic role in this reaction, but requires other protein(s) of the complex to fulfill this activity. The chain is tRNA N6-adenosine threonylcarbamoyltransferase from Thermococcus kodakarensis (strain ATCC BAA-918 / JCM 12380 / KOD1) (Pyrococcus kodakaraensis (strain KOD1)).